Consider the following 360-residue polypeptide: Phospho-N-acetylmuramoyl-pentapeptide-transferase (360 aa).

The next 10 membrane-spanning stretches (helical) occupy residues 27-47 (ILGV…VIVL), 73-93 (TMGG…WGDL), 97-117 (YVWV…VDDY), 145-165 (AFYL…VPLF), 168-188 (VAIP…VGTS), 199-219 (GLAI…AYLT), 236-256 (SGEL…FLWF), 263-283 (IFMG…IAVI), 288-308 (LVLF…ILQV), and 337-357 (KVIV…FATL).

It belongs to the glycosyltransferase 4 family. MraY subfamily. It depends on Mg(2+) as a cofactor.

The protein localises to the cell inner membrane. The enzyme catalyses UDP-N-acetyl-alpha-D-muramoyl-L-alanyl-gamma-D-glutamyl-meso-2,6-diaminopimeloyl-D-alanyl-D-alanine + di-trans,octa-cis-undecaprenyl phosphate = di-trans,octa-cis-undecaprenyl diphospho-N-acetyl-alpha-D-muramoyl-L-alanyl-D-glutamyl-meso-2,6-diaminopimeloyl-D-alanyl-D-alanine + UMP. The protein operates within cell wall biogenesis; peptidoglycan biosynthesis. Functionally, catalyzes the initial step of the lipid cycle reactions in the biosynthesis of the cell wall peptidoglycan: transfers peptidoglycan precursor phospho-MurNAc-pentapeptide from UDP-MurNAc-pentapeptide onto the lipid carrier undecaprenyl phosphate, yielding undecaprenyl-pyrophosphoryl-MurNAc-pentapeptide, known as lipid I. The protein is Phospho-N-acetylmuramoyl-pentapeptide-transferase of Marinomonas sp. (strain MWYL1).